A 2276-amino-acid chain; its full sequence is Non-reducing polyketide synthase VdtA (2276 aa).

Positions tyrosine 8–histidine 243 are N-terminal acylcarrier protein transacylase (SAT) domain. Residues arginine 372 to aspartate 804 enclose the Ketosynthase family 3 (KS3) domain. Residues cysteine 544, histidine 679, and histidine 723 each act as for beta-ketoacyl synthase activity in the active site. The interval phenylalanine 905–arginine 1206 is malonyl-CoA:ACP transacylase (MAT) domain. The active-site For acyl/malonyl transferase activity is the serine 996. Positions threonine 1300 to glutamine 1616 are product template (PT) domain. Residues histidine 1304–threonine 1438 are N-terminal hotdog fold. Positions histidine 1304–arginine 1612 constitute a PKS/mFAS DH domain. Histidine 1336 functions as the Proton acceptor; for dehydratase activity in the catalytic mechanism. The segment at threonine 1465–arginine 1612 is C-terminal hotdog fold. Aspartate 1525 acts as the Proton donor; for dehydratase activity in catalysis. The Carrier 1 domain maps to serine 1655–asparagine 1729. Serine 1689 carries the O-(pantetheine 4'-phosphoryl)serine modification. The segment at alanine 1735–isoleucine 1762 is disordered. Residues proline 1748–proline 1761 show a composition bias toward low complexity. Residues arginine 1765–asparagine 1839 enclose the Carrier 2 domain. Residue serine 1799 is modified to O-(pantetheine 4'-phosphoryl)serine. Over residues serine 1840 to arginine 1854 the composition is skewed to polar residues. The segment at serine 1840–phenylalanine 1882 is disordered. Positions alanine 1857–aspartate 1868 are enriched in basic and acidic residues. The Carrier 3 domain maps to alanine 1886–serine 1964. Residue serine 1923 is modified to O-(pantetheine 4'-phosphoryl)serine. Positions threonine 1967–proline 1993 are disordered. The span at threonine 1969 to serine 1990 shows a compositional bias: low complexity. The segment at proline 2020–serine 2271 is thioesterase (TE) domain.

Its subcellular location is the cytoplasmic vesicle. It carries out the reaction 7 malonyl-CoA + acetyl-CoA + 7 H(+) = 7,9,10-trihydroxy-3-(2-oxopropyl)-1H-benzo[g]isochromen-1-one + 7 CO2 + 8 CoA + 2 H2O. Its pathway is secondary metabolite biosynthesis. Non-reducing polyketide synthase; part of the gene cluster that mediates the biosynthesis of viriditoxin, one of the 'classical' secondary metabolites produced by fungi and that has antibacterial activity. The first step is performed by the polyketide synthase VdtA which condenses one acetyl-CoA and 6 malonyl-CoA units to form the heptaketide monomer backbone of viriditoxin. The product of VdtA is then O-methylated on C7 by the O-methyltransferase VdtC. The O-methyl group is important for the stereoselective coupling of the monomers at the final step of viriditoxin biosynthesis. The short-chain dehydrogenase/reductase VdtF then acts as a stereospecific reductase converting the pyrone to dihydropyrone via the reduction of the C3-C4 double bond. The FAD-binding monooxygenase VdtE then converts the ketone group into a methyl-ester group to yield semi-viriditoxin. Finally, the laccase VdtB is involved in dimerization of 2 semi-viriditoxin molecules to yield the final viriditoxin. VdtB is responsible for the regioselective 6,6'-coupling of semi-viriditoxin, which yields (M)-viriditoxin and (P)-viriditoxin at a ratio of 1:2. The non-catalytic carboxylesterase-like protein VdtD affects the stereochemistical outcome of the coupling. The highly reducing polyketide synthase VdtX is not involved in viriditoxin synthesis, but might possibly play a role in the production of additional metabolites not identified yet. The polypeptide is Non-reducing polyketide synthase VdtA (Byssochlamys spectabilis (Paecilomyces variotii)).